The following is a 558-amino-acid chain: Potassium-transporting ATPase potassium-binding subunit (558 aa).

12 helical membrane-spanning segments follow: residues 1 to 21, 60 to 80, 129 to 149, 169 to 189, 246 to 266, 281 to 301, 326 to 346, 353 to 373, 376 to 396, 415 to 435, 485 to 505, and 523 to 543; these read MSIVLFLIVFILLSLIVSRYL, IKHFLLFNGLMGGLSFVLLLI, VITFLMFTSAASGYAVCIAML, FIVRVLIPFALIISLFLISQG, WSNYAEALSMMLIPGSLVFLF, IMIFVAMFVMFIGFLVTCLYF, FGIGLSALFTTITTAFTTGTV, LTPLGGMVPMVLMMLNAVFGG, VGLMNMLIYVMLTVFICSLMI, IALSFLVHPLLILVFSALAFI, IVMLLARYIPIVLQILIVSSL, and LFFSSVLIIFIILLSGLTFLP.

The protein belongs to the KdpA family. The system is composed of three essential subunits: KdpA, KdpB and KdpC.

The protein resides in the cell membrane. Part of the high-affinity ATP-driven potassium transport (or Kdp) system, which catalyzes the hydrolysis of ATP coupled with the electrogenic transport of potassium into the cytoplasm. This subunit binds the extracellular potassium ions and delivers the ions to the membrane domain of KdpB through an intramembrane tunnel. The protein is Potassium-transporting ATPase potassium-binding subunit of Staphylococcus haemolyticus (strain JCSC1435).